A 431-amino-acid polypeptide reads, in one-letter code: MKKVYSKIESINGSVITVKADGVSYGELAEVQTRFGASLAEVNKLEGDLVSLQVFAGGRGVSTGDEVRFLGKEMQVSYSEDLLGRIFNGSGDPRDSGPALKDNMIPIGGPSVNPSKRILANRMIRTGIPMIDVFNTLVVSQKLPIFSSSGEPYNELLARIAMQAEVDVIILGGMGLKYDDYLYFKDTLEEAGALSRTAMFVHTAADPTVECLMIPDMCLAVAEKFAIAGKNVLVLLTDMTNFADAMKEIAIIQEQVPSNRGYPGDLYSQLAARYEKAVDFADAGSVTVLAVTTMPGDDVTHPVPDNTGYITEGQFYLKNGRIEPFGSLSRLKQNVNGKTRDDHRALMDNMIKLYASYKDTLEKKSMGFMMSEWDEKLLKYGAKFESGMMDLSVNIPLEDALNLGWKILAECFTREETGIKSELVNKYWPAN.

This sequence belongs to the ATPase alpha/beta chains family.

Functionally, produces ATP from ADP in the presence of a proton gradient across the membrane. The V-type beta chain is a regulatory subunit. The protein is V-type ATP synthase beta chain of Treponema denticola (strain ATCC 35405 / DSM 14222 / CIP 103919 / JCM 8153 / KCTC 15104).